The following is a 92-amino-acid chain: C-C motif chemokine 22 (92 aa).

Residues 1-24 (MATLRVPLLVALVLLAVAIQTSDA) form the signal peptide. Intrachain disulfides connect Cys36/Cys60 and Cys37/Cys76.

Belongs to the intercrine beta (chemokine CC) family. As to expression, expressed by activated splenic B-lymphocytes and dendritic cells. Low expression in lung, thymocytes, lymph node, and unstimulated splenic cells.

The protein localises to the secreted. In terms of biological role, chemotactic for activated T-lymphocytes. May play an important role in the collaboration of dendritic cells and B-lymphocytes with T-cells in immune responses. This Mus musculus (Mouse) protein is C-C motif chemokine 22 (Ccl22).